The sequence spans 120 residues: Small ribosomal subunit protein uS13 (120 aa).

The interval 94-120 (GLPLRGQRTRTNARTRKGPRKAIAGKK) is disordered.

This sequence belongs to the universal ribosomal protein uS13 family. In terms of assembly, part of the 30S ribosomal subunit. Forms a loose heterodimer with protein S19. Forms two bridges to the 50S subunit in the 70S ribosome.

Located at the top of the head of the 30S subunit, it contacts several helices of the 16S rRNA. In the 70S ribosome it contacts the 23S rRNA (bridge B1a) and protein L5 of the 50S subunit (bridge B1b), connecting the 2 subunits; these bridges are implicated in subunit movement. Contacts the tRNAs in the A and P-sites. The protein is Small ribosomal subunit protein uS13 of Aromatoleum aromaticum (strain DSM 19018 / LMG 30748 / EbN1) (Azoarcus sp. (strain EbN1)).